The following is a 228-amino-acid chain: 2,3-bisphosphoglycerate-dependent phosphoglycerate mutase (228 aa).

Substrate is bound by residues 8-15 (RHGQSEWN), 21-22 (TG), R60, 87-90 (ERHY), K98, 114-115 (RR), and 183-184 (GN). H9 (tele-phosphohistidine intermediate) is an active-site residue. E87 acts as the Proton donor/acceptor in catalysis.

It belongs to the phosphoglycerate mutase family. BPG-dependent PGAM subfamily.

The enzyme catalyses (2R)-2-phosphoglycerate = (2R)-3-phosphoglycerate. Its pathway is carbohydrate degradation; glycolysis; pyruvate from D-glyceraldehyde 3-phosphate: step 3/5. In terms of biological role, catalyzes the interconversion of 2-phosphoglycerate and 3-phosphoglycerate. The chain is 2,3-bisphosphoglycerate-dependent phosphoglycerate mutase from Staphylococcus epidermidis (strain ATCC 35984 / DSM 28319 / BCRC 17069 / CCUG 31568 / BM 3577 / RP62A).